A 350-amino-acid polypeptide reads, in one-letter code: GTP 3',8-cyclase (350 aa).

The region spanning 27-245 (TFGRIATDLR…LRAHFTLVPD (219 aa)) is the Radical SAM core domain. Residue arginine 36 coordinates GTP. Positions 43 and 47 each coordinate [4Fe-4S] cluster. Residue tyrosine 49 participates in S-adenosyl-L-methionine binding. Cysteine 50 contacts [4Fe-4S] cluster. Residue arginine 87 coordinates GTP. Position 91 (glycine 91) interacts with S-adenosyl-L-methionine. Threonine 118 contributes to the GTP binding site. Serine 142 is an S-adenosyl-L-methionine binding site. Lysine 179 serves as a coordination point for GTP. Methionine 213 lines the S-adenosyl-L-methionine pocket. [4Fe-4S] cluster-binding residues include cysteine 277 and cysteine 280. Position 282-284 (282-284 (RTR)) interacts with GTP. Cysteine 294 is a binding site for [4Fe-4S] cluster.

Belongs to the radical SAM superfamily. MoaA family. Monomer and homodimer. It depends on [4Fe-4S] cluster as a cofactor.

It carries out the reaction GTP + AH2 + S-adenosyl-L-methionine = (8S)-3',8-cyclo-7,8-dihydroguanosine 5'-triphosphate + 5'-deoxyadenosine + L-methionine + A + H(+). Its pathway is cofactor biosynthesis; molybdopterin biosynthesis. In terms of biological role, catalyzes the cyclization of GTP to (8S)-3',8-cyclo-7,8-dihydroguanosine 5'-triphosphate. The sequence is that of GTP 3',8-cyclase from Mycobacterium sp. (strain JLS).